Consider the following 428-residue polypeptide: MSVTVVLGSQWGDEGKGKLVDILAADIDVCARCAGGNNAGHTIIVPIDGVLKTFAFHLLPSGLVNPRCTGLIGSGLVVHVPSFFAELDALEAQGLDCSNRLFISDRAHLVFDFHQIVDGLKEVELGGKSIGTTKRGIGPAYSGKASRSGLRVHHLFDHETFAEKFRKLVEGRYKRYGHFEYDTEGEIERYKKLAERLRPYVVDSVAYIHKAITSGKKVLVEGANALMLDLDFGTYPYVTSSSTTIGGVCTGLGIPPKMIGRTIGVVKAYTTRVGGGPFPAEQLNDIGVHLQEVGREYGTTTGRRRRCGWLDLVVLRHSSMINGYDSLNLTKLDVLDQLPEIKVATRYLVDGKELEGFPADLELLANVDVEYVTLPGWQSSIENITTYDDLPENCKGYIKFIEDSLNVPIEWIGVGPARKSMVRKELKQ.

Residues 12-18 (GDEGKGK) and 40-42 (GHT) each bind GTP. Aspartate 13 acts as the Proton acceptor in catalysis. Aspartate 13 and glycine 40 together coordinate Mg(2+). Residues 13–16 (DEGK), 38–41 (NAGH), threonine 133, arginine 147, asparagine 224, threonine 239, and arginine 303 each bind IMP. Catalysis depends on histidine 41, which acts as the Proton donor. Residue 299–305 (TTTGRRR) coordinates substrate. Residues arginine 305, 331–333 (KLD), and 413–415 (GVG) contribute to the GTP site.

The protein belongs to the adenylosuccinate synthetase family. Homodimer. Requires Mg(2+) as cofactor.

The protein localises to the cytoplasm. It carries out the reaction IMP + L-aspartate + GTP = N(6)-(1,2-dicarboxyethyl)-AMP + GDP + phosphate + 2 H(+). It functions in the pathway purine metabolism; AMP biosynthesis via de novo pathway; AMP from IMP: step 1/2. In terms of biological role, plays an important role in the de novo pathway and in the salvage pathway of purine nucleotide biosynthesis. Catalyzes the first committed step in the biosynthesis of AMP from IMP. The chain is Adenylosuccinate synthetase 1 from Laccaria bicolor (strain S238N-H82 / ATCC MYA-4686) (Bicoloured deceiver).